A 139-amino-acid chain; its full sequence is Probable cytochrome b5 (139 aa).

One can recognise a Cytochrome b5 heme-binding domain in the interval serine 2 to lysine 78. Heme is bound by residues histidine 37 and histidine 61. Residues glycine 105 to tyrosine 125 form a helical membrane-spanning segment.

This sequence belongs to the cytochrome b5 family.

It localises to the endoplasmic reticulum membrane. It is found in the microsome membrane. Functionally, membrane bound hemoprotein which function as an electron carrier for several membrane bound oxygenases. This Neurospora crassa (strain ATCC 24698 / 74-OR23-1A / CBS 708.71 / DSM 1257 / FGSC 987) protein is Probable cytochrome b5.